The primary structure comprises 307 residues: Furaquinocin biosynthesis prenyltransferase (307 aa).

This sequence belongs to the aromatic prenyltransferase family. As to quaternary structure, monomer.

The enzyme catalyses 2-O,3-dimethylflaviolin + (2E)-geranyl diphosphate = 6-linalyl-2-O,3-dimethylflaviolin + diphosphate. It carries out the reaction 2-O,3-dimethylflaviolin + (2E)-geranyl diphosphate + H(+) = 7-O-geranyl-2-O,3-dimethylflaviolin + diphosphate. Does not require any metal cations for activity. Its function is as follows. Involved in the biosynthesis of furaquinocin. Catalyzes the transfer of a geranyl group to 2-methoxy-3-methyl-flaviolin to yield 6-prenyl-2-methoxy-3-methyl-flaviolin and 7-O-geranyl-2-methoxy-3-methyl-flaviolin in a 10:1 ratio. Can also use other substrates such as flaviolin or 1,3-dihydroxy naphthalene, and can also use DMAPP as prenyl donor. The protein is Furaquinocin biosynthesis prenyltransferase of Streptomyces sp. (strain KO-3988).